The primary structure comprises 218 residues: Putative tRNA methyltransferase MG248 (218 aa).

Belongs to the TrmK family.

The protein localises to the cytoplasm. The protein is Putative tRNA methyltransferase MG248 of Mycoplasma genitalium (strain ATCC 33530 / DSM 19775 / NCTC 10195 / G37) (Mycoplasmoides genitalium).